Consider the following 344-residue polypeptide: N-acetyl-gamma-glutamyl-phosphate reductase (344 aa).

Cys-149 is an active-site residue.

The protein belongs to the NAGSA dehydrogenase family. Type 1 subfamily.

Its subcellular location is the cytoplasm. It carries out the reaction N-acetyl-L-glutamate 5-semialdehyde + phosphate + NADP(+) = N-acetyl-L-glutamyl 5-phosphate + NADPH + H(+). It functions in the pathway amino-acid biosynthesis; L-arginine biosynthesis; N(2)-acetyl-L-ornithine from L-glutamate: step 3/4. Functionally, catalyzes the NADPH-dependent reduction of N-acetyl-5-glutamyl phosphate to yield N-acetyl-L-glutamate 5-semialdehyde. The chain is N-acetyl-gamma-glutamyl-phosphate reductase from Shouchella clausii (strain KSM-K16) (Alkalihalobacillus clausii).